Reading from the N-terminus, the 245-residue chain is Type III pantothenate kinase (245 aa).

6-13 contributes to the ATP binding site; it reads DQGNTILK. Substrate-binding positions include Y86 and 93–96; that span reads GTDR. The Proton acceptor role is filled by D95. K(+) is bound at residue D116. T119 contributes to the ATP binding site. Residue T171 coordinates substrate.

This sequence belongs to the type III pantothenate kinase family. As to quaternary structure, homodimer. It depends on NH4(+) as a cofactor. K(+) is required as a cofactor.

The protein localises to the cytoplasm. It carries out the reaction (R)-pantothenate + ATP = (R)-4'-phosphopantothenate + ADP + H(+). The protein operates within cofactor biosynthesis; coenzyme A biosynthesis; CoA from (R)-pantothenate: step 1/5. Catalyzes the phosphorylation of pantothenate (Pan), the first step in CoA biosynthesis. In Azobacteroides pseudotrichonymphae genomovar. CFP2, this protein is Type III pantothenate kinase.